The sequence spans 86 residues: Selenoprotein W (86 aa).

The segment at residues Cys10–Sec13 is a cross-link (cysteinyl-selenocysteine (Cys-Sec); redox-active). Sec13 is a non-standard amino acid (selenocysteine).

It belongs to the SelWTH family. Selenoprotein W subfamily.

It localises to the cytoplasm. Plays a role as a glutathione (GSH)-dependent antioxidant. May be involved in a redox-related process. May play a role in the myopathies of selenium deficiency. The polypeptide is Selenoprotein W (Danio rerio (Zebrafish)).